The following is a 549-amino-acid chain: Glucose-6-phosphate isomerase (549 aa).

Catalysis depends on Glu353, which acts as the Proton donor. Active-site residues include His384 and Lys512.

This sequence belongs to the GPI family.

It localises to the cytoplasm. The enzyme catalyses alpha-D-glucose 6-phosphate = beta-D-fructose 6-phosphate. Its pathway is carbohydrate biosynthesis; gluconeogenesis. It functions in the pathway carbohydrate degradation; glycolysis; D-glyceraldehyde 3-phosphate and glycerone phosphate from D-glucose: step 2/4. Its function is as follows. Catalyzes the reversible isomerization of glucose-6-phosphate to fructose-6-phosphate. In Alteromonas mediterranea (strain DSM 17117 / CIP 110805 / LMG 28347 / Deep ecotype), this protein is Glucose-6-phosphate isomerase.